A 234-amino-acid polypeptide reads, in one-letter code: tRNA1(Val) (adenine(37)-N6)-methyltransferase (234 aa).

Belongs to the methyltransferase superfamily. tRNA (adenine-N(6)-)-methyltransferase family.

It is found in the cytoplasm. The catalysed reaction is adenosine(37) in tRNA1(Val) + S-adenosyl-L-methionine = N(6)-methyladenosine(37) in tRNA1(Val) + S-adenosyl-L-homocysteine + H(+). In terms of biological role, specifically methylates the adenine in position 37 of tRNA(1)(Val) (anticodon cmo5UAC). The polypeptide is tRNA1(Val) (adenine(37)-N6)-methyltransferase (Phocaeicola vulgatus (strain ATCC 8482 / DSM 1447 / JCM 5826 / CCUG 4940 / NBRC 14291 / NCTC 11154) (Bacteroides vulgatus)).